Reading from the N-terminus, the 322-residue chain is HPr kinase/phosphorylase (322 aa).

Catalysis depends on residues H153 and K174. 168–175 provides a ligand contact to ATP; the sequence is GRSGLGKS. S175 provides a ligand contact to Mg(2+). D192 acts as the Proton acceptor; for phosphorylation activity. Proton donor; for dephosphorylation activity in catalysis. An important for the catalytic mechanism of both phosphorylation and dephosphorylation region spans residues 217-226; it reads MEIRGLGVVD. Residue E218 participates in Mg(2+) binding. Residue R259 is part of the active site. The segment at 280–285 is important for the catalytic mechanism of dephosphorylation; that stretch reads PIFPGK.

The protein belongs to the HPrK/P family. As to quaternary structure, homohexamer. It depends on Mg(2+) as a cofactor.

The enzyme catalyses [HPr protein]-L-serine + ATP = [HPr protein]-O-phospho-L-serine + ADP + H(+). It catalyses the reaction [HPr protein]-O-phospho-L-serine + phosphate + H(+) = [HPr protein]-L-serine + diphosphate. Functionally, catalyzes the ATP- as well as the pyrophosphate-dependent phosphorylation of a specific serine residue in HPr, a phosphocarrier protein of the phosphoenolpyruvate-dependent sugar phosphotransferase system (PTS). HprK/P also catalyzes the pyrophosphate-producing, inorganic phosphate-dependent dephosphorylation (phosphorolysis) of seryl-phosphorylated HPr (P-Ser-HPr). This chain is HPr kinase/phosphorylase, found in Chlorobium phaeobacteroides (strain DSM 266 / SMG 266 / 2430).